A 276-amino-acid polypeptide reads, in one-letter code: MYLGAHLSISKGFESAVREALSIGATTFQFFTRNPRGGAAKALDPDDIARSIWLREEHGFGPLVAHAPYTINLAAPKEETWAFAKMTLAADIVRMATAQVPYMVVHPGSHVGQGIEAGIERITQALNEILRPDQGVMVLLEGMSGAGTEVGGRFEELRAIIDGLQVPEVVGVNLDSCHLFGAGYDVKSDFAAVLDAFDRIIGLERLKAMHINDSQQPLGSHKDRHALLGQGLIGSDALAALLNHPALVGLPLNLETPGEIADYRREIAWMRSALKQ.

Zn(2+) contacts are provided by histidine 66, histidine 106, glutamate 141, aspartate 175, histidine 178, histidine 210, aspartate 223, histidine 225, and glutamate 255.

Belongs to the AP endonuclease 2 family. Zn(2+) serves as cofactor.

The enzyme catalyses Endonucleolytic cleavage to 5'-phosphooligonucleotide end-products.. Endonuclease IV plays a role in DNA repair. It cleaves phosphodiester bonds at apurinic or apyrimidinic (AP) sites, generating a 3'-hydroxyl group and a 5'-terminal sugar phosphate. In Heliobacterium modesticaldum (strain ATCC 51547 / Ice1), this protein is Probable endonuclease 4.